The chain runs to 176 residues: dCTP deaminase (176 aa).

DCTP contacts are provided by residues 99 to 104 (RSTLAR) and D115. The active-site Proton donor/acceptor is E125. A dCTP-binding site is contributed by Q163.

Belongs to the dCTP deaminase family. In terms of assembly, homotrimer.

The catalysed reaction is dCTP + H2O + H(+) = dUTP + NH4(+). The protein operates within pyrimidine metabolism; dUMP biosynthesis; dUMP from dCTP (dUTP route): step 1/2. In terms of biological role, catalyzes the deamination of dCTP to dUTP. The polypeptide is dCTP deaminase (Pyrobaculum calidifontis (strain DSM 21063 / JCM 11548 / VA1)).